Here is a 139-residue protein sequence, read N- to C-terminus: Endoribonuclease YbeY (139 aa).

Residues H107, H111, and D117 each contribute to the Zn(2+) site.

The protein belongs to the endoribonuclease YbeY family. Zn(2+) is required as a cofactor.

The protein localises to the cytoplasm. Its function is as follows. Single strand-specific metallo-endoribonuclease involved in late-stage 70S ribosome quality control and in maturation of the 3' terminus of the 16S rRNA. The polypeptide is Endoribonuclease YbeY (Azobacteroides pseudotrichonymphae genomovar. CFP2).